Reading from the N-terminus, the 397-residue chain is Na(+)/H(+) antiporter NhaA 1 (397 aa).

12 helical membrane passes run 15–35 (FQLE…ALII), 42–62 (YLYG…LNIA), 65–85 (LLLW…GLEV), 101–121 (ILPA…YWFI), 129–149 (VAGW…VLAL), 160–180 (LFLM…IALF), 183–203 (GTLS…LVAM), 219–241 (LILW…ALAF), 265–285 (WVAY…SLAG), 299–319 (ITIG…WVAV), 335–355 (ILGV…VGSL), and 370–390 (MGIL…TAMA).

The protein belongs to the NhaA Na(+)/H(+) (TC 2.A.33) antiporter family.

It is found in the cell inner membrane. It catalyses the reaction Na(+)(in) + 2 H(+)(out) = Na(+)(out) + 2 H(+)(in). Functionally, na(+)/H(+) antiporter that extrudes sodium in exchange for external protons. In Pseudomonas putida (strain ATCC 47054 / DSM 6125 / CFBP 8728 / NCIMB 11950 / KT2440), this protein is Na(+)/H(+) antiporter NhaA 1.